Consider the following 398-residue polypeptide: Phosphoglycerate kinase (398 aa).

Residues 21–23 (DIN), Arg-37, 60–63 (HQGR), Arg-117, and Arg-157 each bind substrate. Residues Glu-332 and 357-360 (GGDT) each bind ATP.

Belongs to the phosphoglycerate kinase family. In terms of assembly, monomer.

The protein localises to the cytoplasm. It catalyses the reaction (2R)-3-phosphoglycerate + ATP = (2R)-3-phospho-glyceroyl phosphate + ADP. It functions in the pathway carbohydrate degradation; glycolysis; pyruvate from D-glyceraldehyde 3-phosphate: step 2/5. The chain is Phosphoglycerate kinase from Halobacterium salinarum (strain ATCC 29341 / DSM 671 / R1).